Consider the following 322-residue polypeptide: Ferredoxin--NADP reductase (322 aa).

Residues aspartate 34, glutamine 42, tyrosine 47, valine 87, phenylalanine 120, aspartate 279, and threonine 320 each coordinate FAD.

The protein belongs to the ferredoxin--NADP reductase type 2 family. Homodimer. It depends on FAD as a cofactor.

It catalyses the reaction 2 reduced [2Fe-2S]-[ferredoxin] + NADP(+) + H(+) = 2 oxidized [2Fe-2S]-[ferredoxin] + NADPH. The protein is Ferredoxin--NADP reductase of Streptococcus pneumoniae (strain Hungary19A-6).